A 586-amino-acid chain; its full sequence is BTB/POZ domain and ankyrin repeat-containing protein NPR1 (586 aa).

The BTB domain maps to 63–139 (SDADIVVEGI…VYTGKLKPSP (77 aa)). The segment at 142 to 156 (VSTCVHNVCAHDACR) adopts a C2HC NPR-type zinc-finger fold. The Zn(2+) site is built by Cys-145, Cys-150, His-152, and Cys-155. ANK repeat units lie at residues 266–296 (KRIR…TLDE), 298–325 (NALH…DVNL), and 329–358 (RGYT…RASE). Residues 388–522 (EANKDRICID…LDKFIDDDLP (135 aa)) are salicylic acid-binding core (SBC). Arg-433 contacts salicylate. The interval 561–586 (NLSGLSSSSSTTSPEKIGANQKVREP) is disordered. A compositionally biased stretch (low complexity) spans 562 to 573 (LSGLSSSSSTTS).

Belongs to the plant 'ANKYRIN-BTB/POZ' family. 'NPR1-like' subfamily. Highly expressed in leaves. Expressed at low levels in roots and stems.

Its subcellular location is the cytoplasm. It is found in the nucleus. The protein localises to the nuclear body. The protein operates within protein modification; protein ubiquitination. In terms of biological role, salicylic acid (SA)-binding substrate-specific adapter of an E3 ubiquitin-protein ligase complex (CUL3-RBX1-BTB) which mediates the ubiquitination and subsequent proteasomal degradation of target proteins. Transcription cofactor that represses gene expression in the absence of salicylic acid (SA), when attached to negative cis-elements (W-box) with WRKY transcription factors, but stimulates gene expression upon activation by SA, when sumoylated and attached to positive cis-elements (as-1) with TGA transcription factors, thus confering immunity through a series of gene regulations ending in a significant increase in antimicrobial and defense genes expression. Probable component of the salicylic acid (SA) defense signaling pathway and pathogen-induced systemic acquired resistance (SAR). May be involved in disease resistance against fungal pathogens. May be involved in tolerance to salt and osmotic stresses. This chain is BTB/POZ domain and ankyrin repeat-containing protein NPR1, found in Malus hupehensis (Chinese crab apple).